A 281-amino-acid polypeptide reads, in one-letter code: Pantothenate synthetase (281 aa).

An ATP-binding site is contributed by 31–38; that stretch reads MGNLHAGH. Residue His-38 is the Proton donor of the active site. Residue Gln-62 coordinates (R)-pantoate. Gln-62 is a beta-alanine binding site. Position 150-153 (150-153) interacts with ATP; the sequence is GKKD. (R)-pantoate is bound at residue Gln-156. Residues Val-179 and 187–190 each bind ATP; that span reads MSSR.

This sequence belongs to the pantothenate synthetase family. Homodimer.

Its subcellular location is the cytoplasm. The catalysed reaction is (R)-pantoate + beta-alanine + ATP = (R)-pantothenate + AMP + diphosphate + H(+). It participates in cofactor biosynthesis; (R)-pantothenate biosynthesis; (R)-pantothenate from (R)-pantoate and beta-alanine: step 1/1. Catalyzes the condensation of pantoate with beta-alanine in an ATP-dependent reaction via a pantoyl-adenylate intermediate. This Xylella fastidiosa (strain M12) protein is Pantothenate synthetase.